Consider the following 320-residue polypeptide: Polyisoprenyl-teichoic acid--peptidoglycan teichoic acid transferase TagU (320 aa).

Residues 1–15 (MVSRTERKQHKKRRK) are Cytoplasmic-facing. Residues 16 to 36 (WPFWLGGILLVLLLLISGGIF) form a helical; Signal-anchor for type II membrane protein membrane-spanning segment. The Extracellular portion of the chain corresponds to 37 to 320 (LIYNQVGAVV…SEITGHMQEQ (284 aa)).

Belongs to the LytR/CpsA/Psr (LCP) family.

The protein localises to the cell membrane. The protein operates within cell wall biogenesis. Functionally, may catalyze the final step in cell wall teichoic acid biosynthesis, the transfer of the anionic cell wall polymers (APs) from their lipid-linked precursor to the cell wall peptidoglycan (PG). This is Polyisoprenyl-teichoic acid--peptidoglycan teichoic acid transferase TagU from Oceanobacillus iheyensis (strain DSM 14371 / CIP 107618 / JCM 11309 / KCTC 3954 / HTE831).